Consider the following 875-residue polypeptide: Acetyl-coenzyme A carboxylase carboxyl transferase subunit alpha, chloroplastic (875 aa).

The N-terminal 50 residues, 1–50 (MASSSATLVGSTASDLLRSSTTGFTGVPLRTLGRAGLVLKRRDLTVSVTA), are a transit peptide targeting the chloroplast. A CoA carboxyltransferase C-terminal domain is found at 128-380 (EAKYQKALVE…KIAINEAMDE (253 aa)). Residues 664 to 705 (LLLDKNKAATRKQELKKKSDEHKEAARLEQELKKKFDEVMDT) adopt a coiled-coil conformation. The segment at 845-875 (KEKYENLTRPAGDTLTDDKLREKVGVNRNFS) is disordered. Over residues 860–869 (TDDKLREKVG) the composition is skewed to basic and acidic residues.

This sequence belongs to the AccA family. As to quaternary structure, acetyl-CoA carboxylase is a heterohexamer composed of biotin carboxyl carrier protein, biotin carboxylase and two subunits each of ACCase subunit alpha and ACCase plastid-coded subunit beta (accD).

It localises to the plastid. It is found in the chloroplast inner membrane. It carries out the reaction N(6)-carboxybiotinyl-L-lysyl-[protein] + acetyl-CoA = N(6)-biotinyl-L-lysyl-[protein] + malonyl-CoA. Its pathway is lipid metabolism; malonyl-CoA biosynthesis; malonyl-CoA from acetyl-CoA: step 1/1. Activated by reductants such as dithiothreitol (DTT), and by thioredoxin in vivo, following exposure to light. In terms of biological role, component of the acetyl coenzyme A carboxylase (ACC) complex. First, biotin carboxylase catalyzes the carboxylation of biotin on its carrier protein (BCCP) and then the CO(2) group is transferred by the carboxyltransferase to acetyl-CoA to form malonyl-CoA. The sequence is that of Acetyl-coenzyme A carboxylase carboxyl transferase subunit alpha, chloroplastic (ACCA) from Pisum sativum (Garden pea).